The sequence spans 315 residues: GTP cyclohydrolase MptA (315 aa).

Belongs to the GTP cyclohydrolase IV family. Homodimer. The cofactor is Fe(2+).

It carries out the reaction GTP + H2O = 7,8-dihydroneopterin 2',3'-cyclic phosphate + formate + diphosphate + H(+). Its pathway is cofactor biosynthesis; 5,6,7,8-tetrahydromethanopterin biosynthesis. Its function is as follows. Converts GTP to 7,8-dihydro-D-neopterin 2',3'-cyclic phosphate, the first intermediate in the biosynthesis of coenzyme methanopterin. The polypeptide is GTP cyclohydrolase MptA (Methanococcus maripaludis (strain C7 / ATCC BAA-1331)).